The primary structure comprises 295 residues: MSKIVGSDKVKRGMAEMQKGGVIMDVVNAEQAKIAEAAGAVAVMALERVPSDIRAAGGVARMADPRIVEEVMNAVSIPVMAKGRIGHITEARVLEAMGVDYIDESEVLTPADEEFHLKKDEFTVPFVCGCRDLGEAARRIGEGAAMLRTKGEPGTGNIVEAVRHLRKVNAQVRKLTVMNDDEIMTEAKLLGAPYEVLKEIKALGKLPVVNFAAGGVATPADAALMMELGADGVFVGSGIFKSESPEKFAKAIVQATTHYQDYKLIGELSKELGAAMKGLDINKLSLEERMQERGW.

Asp25 provides a ligand contact to D-ribose 5-phosphate. Lys82 acts as the Schiff-base intermediate with D-ribose 5-phosphate in catalysis. Gly154 is a D-ribose 5-phosphate binding site. Residue Arg166 coordinates D-glyceraldehyde 3-phosphate. Residues Gly215 and 236 to 237 contribute to the D-ribose 5-phosphate site; that span reads GS.

This sequence belongs to the PdxS/SNZ family. As to quaternary structure, in the presence of PdxT, forms a dodecamer of heterodimers.

The catalysed reaction is aldehydo-D-ribose 5-phosphate + D-glyceraldehyde 3-phosphate + L-glutamine = pyridoxal 5'-phosphate + L-glutamate + phosphate + 3 H2O + H(+). The protein operates within cofactor biosynthesis; pyridoxal 5'-phosphate biosynthesis. Its function is as follows. Catalyzes the formation of pyridoxal 5'-phosphate from ribose 5-phosphate (RBP), glyceraldehyde 3-phosphate (G3P) and ammonia. The ammonia is provided by the PdxT subunit. Can also use ribulose 5-phosphate and dihydroxyacetone phosphate as substrates, resulting from enzyme-catalyzed isomerization of RBP and G3P, respectively. This is Pyridoxal 5'-phosphate synthase subunit PdxS from Macrococcus caseolyticus (strain JCSC5402) (Macrococcoides caseolyticum).